We begin with the raw amino-acid sequence, 188 residues long: Pyridoxal 5'-phosphate synthase subunit PdxT (188 aa).

L-glutamine is bound at residue 47–49; the sequence is GES. The active-site Nucleophile is C79. L-glutamine contacts are provided by residues R105 and 134–135; that span reads IR. Residues H170 and E172 each act as charge relay system in the active site.

The protein belongs to the glutaminase PdxT/SNO family. In the presence of PdxS, forms a dodecamer of heterodimers. Only shows activity in the heterodimer.

It carries out the reaction aldehydo-D-ribose 5-phosphate + D-glyceraldehyde 3-phosphate + L-glutamine = pyridoxal 5'-phosphate + L-glutamate + phosphate + 3 H2O + H(+). The enzyme catalyses L-glutamine + H2O = L-glutamate + NH4(+). The protein operates within cofactor biosynthesis; pyridoxal 5'-phosphate biosynthesis. In terms of biological role, catalyzes the hydrolysis of glutamine to glutamate and ammonia as part of the biosynthesis of pyridoxal 5'-phosphate. The resulting ammonia molecule is channeled to the active site of PdxS. This Listeria monocytogenes serotype 4b (strain F2365) protein is Pyridoxal 5'-phosphate synthase subunit PdxT.